Consider the following 151-residue polypeptide: Large ribosomal subunit protein bL9 (151 aa).

Belongs to the bacterial ribosomal protein bL9 family.

Binds to the 23S rRNA. This chain is Large ribosomal subunit protein bL9, found in Oenococcus oeni (strain ATCC BAA-331 / PSU-1).